A 341-amino-acid chain; its full sequence is Killer cell immunoglobulin-like receptor 2DL3 (341 aa).

The signal sequence occupies residues 1-21 (MSLMVVSMVCVGFFLLQGAWP). Over 22–245 (HEGVHRKPSL…SETGNPRHLH (224 aa)) the chain is Extracellular. 2 consecutive Ig-like C2-type domains span residues 42 to 107 (EETV…VTHS) and 142 to 205 (GESV…FRDS). 2 disulfides stabilise this stretch: cysteine 49–cysteine 100 and cysteine 149–cysteine 198. Residues asparagine 84, asparagine 178, and asparagine 211 are each glycosylated (N-linked (GlcNAc...) asparagine). The tract at residues 220-239 (VTGNPSNSWPSPTEPSSETG) is disordered. A compositionally biased stretch (low complexity) spans 223–239 (NPSNSWPSPTEPSSETG). A helical transmembrane segment spans residues 246-265 (VLIGTSVVIILFILLLFFLL). The Cytoplasmic segment spans residues 266–341 (HRWCCNKKNA…VYTELPNAEP (76 aa)).

Belongs to the immunoglobulin superfamily. As to quaternary structure, interacts with ARRB2.

The protein resides in the cell membrane. In terms of biological role, receptor on natural killer (NK) cells for HLA-C alleles (HLA-Cw1, HLA-Cw3 and HLA-Cw7). Inhibits the activity of NK cells thus preventing cell lysis. This is Killer cell immunoglobulin-like receptor 2DL3 from Homo sapiens (Human).